Here is a 367-residue protein sequence, read N- to C-terminus: Cyclin-Y-like protein 1 (367 aa).

A phosphoserine mark is found at Ser-73, Ser-111, and Ser-118. The Cyclin N-terminal domain occupies 186–291 (EYFKHDPEHK…FLELLQFNIN (106 aa)). Ser-352 carries the phosphoserine modification.

This sequence belongs to the cyclin family. Cyclin Y subfamily. As to quaternary structure, interacts with CDK16; this interaction mutually increases the stability of CDK16 and CCNYL1 and increases the kinase activity of CDK16. Highly expressed in the testis. Largely restricted to germ cells in the testis.

The protein localises to the cell membrane. Functionally, key regulator of Wnt signaling implicated in various biological processes including male fertility, embryonic neurogenesis and cortex development. Activates the cyclin-dependent kinase CDK16, and promotes sperm maturation. This Mus musculus (Mouse) protein is Cyclin-Y-like protein 1.